The following is a 272-amino-acid chain: Dermonecrotic toxin SpeSicTox-betaIB1a (272 aa).

The active site involves H5. Mg(2+) contacts are provided by E25 and D27. Residue H41 is the Nucleophile of the active site. Disulfide bonds link C45-C51 and C47-C191. D85 serves as a coordination point for Mg(2+).

It belongs to the arthropod phospholipase D family. Class II subfamily. Requires Mg(2+) as cofactor. Expressed by the venom gland.

Its subcellular location is the secreted. The enzyme catalyses an N-(acyl)-sphingosylphosphocholine = an N-(acyl)-sphingosyl-1,3-cyclic phosphate + choline. The catalysed reaction is an N-(acyl)-sphingosylphosphoethanolamine = an N-(acyl)-sphingosyl-1,3-cyclic phosphate + ethanolamine. It catalyses the reaction a 1-acyl-sn-glycero-3-phosphocholine = a 1-acyl-sn-glycero-2,3-cyclic phosphate + choline. It carries out the reaction a 1-acyl-sn-glycero-3-phosphoethanolamine = a 1-acyl-sn-glycero-2,3-cyclic phosphate + ethanolamine. Functionally, dermonecrotic toxins cleave the phosphodiester linkage between the phosphate and headgroup of certain phospholipids (sphingolipid and lysolipid substrates), forming an alcohol (often choline) and a cyclic phosphate. This toxin acts on sphingomyelin (SM). It may also act on ceramide phosphoethanolamine (CPE), lysophosphatidylcholine (LPC) and lysophosphatidylethanolamine (LPE), but not on lysophosphatidylserine (LPS), and lysophosphatidylglycerol (LPG). It acts by transphosphatidylation, releasing exclusively cyclic phosphate products as second products. Induces dermonecrosis, hemolysis, increased vascular permeability, edema, inflammatory response, and platelet aggregation. The chain is Dermonecrotic toxin SpeSicTox-betaIB1a from Sicarius peruensis (Six-eyed sand spider).